The following is a 128-amino-acid chain: MERPVPGQGYGFPRSHRLASPVEFRFVFEDACRSSDSWLTVLARPNSLAHPRLGLALSRKQIRKAVDRNRIKRLVRESFRLRQAQLGTIDYVVMARTPATSVNSAVLLRALEKHWLILTRRCSGSSSP.

The protein belongs to the RnpA family. In terms of assembly, consists of a catalytic RNA component (M1 or rnpB) and a protein subunit.

It catalyses the reaction Endonucleolytic cleavage of RNA, removing 5'-extranucleotides from tRNA precursor.. Functionally, RNaseP catalyzes the removal of the 5'-leader sequence from pre-tRNA to produce the mature 5'-terminus. It can also cleave other RNA substrates such as 4.5S RNA. The protein component plays an auxiliary but essential role in vivo by binding to the 5'-leader sequence and broadening the substrate specificity of the ribozyme. This is Ribonuclease P protein component from Methylococcus capsulatus (strain ATCC 33009 / NCIMB 11132 / Bath).